A 92-amino-acid chain; its full sequence is Progonadoliberin-1 (92 aa).

The N-terminal stretch at 1–23 (MELVPKFLAGLILLTLCVGGCYA) is a signal peptide. Gln24 carries the post-translational modification Pyrrolidone carboxylic acid. Gly33 bears the Glycine amide mark.

It belongs to the GnRH family.

It is found in the secreted. Stimulates the secretion of gonadotropins; it stimulates the secretion of both luteinizing and follicle-stimulating hormones. This chain is Progonadoliberin-1 (GNRH1), found in Tupaia belangeri (Common tree shrew).